The chain runs to 397 residues: Transcription factor xenB (397 aa).

Residues 220 to 249 (TISDFETGDRQTISRSDTNSEVRPIPESPS) form a disordered region. The segment covering 229–240 (RQTISRSDTNSE) has biased composition (polar residues).

In terms of biological role, transcription factor; part of the gene cluster that mediates the biosynthesis of xenoacremones such as xenoacremone A, a compound that shows inhibitory activity toward the PI3K/AKT signaling pathway and which has the ability to induce apoptosis of A549 lung cancer cells. Acts as a positive regulator of the xenoacremones biosynthesis gene cluster. The sequence is that of Transcription factor xenB from Xenoacremonium sinensis (Endophyte fungus).